Reading from the N-terminus, the 412-residue chain is MQMITLAQQAKIASVELAQFGNVQKNQALLTIAQQLEQRSAEILAANAKDIEFAKNQGISTAIIDRLLLNESRLQGIANDVRNVAKLADPVGQVIDGGVLNSGLKIERQRVPLGVILTIYEARPNVTIDVASLCLKTGNAVILRGGKETKFTNAVLVEVVQQALETAGLPKLAVQAVTDPDRVLLLELLKLDRYIDMVIPRGGAGLHQFCKENSTIPVIVGGIGVCHMFVEKSADQQKALELIANAKTQRPSTCNTLETLLVEKAIAGEFLPKLANRMKALDVTLHTDDLQKTEGIEPLDDARMRQEWLSLDLNVVVIDNLTKAVEHIREYGSQHSEAILTSDYQLARQFVAQVDAAAVYINASTRFTDGGEFGLGAEVAVSTQKLHARGPMGLEALTTYKWVCEGDYLVRK.

It belongs to the gamma-glutamyl phosphate reductase family.

It is found in the cytoplasm. The enzyme catalyses L-glutamate 5-semialdehyde + phosphate + NADP(+) = L-glutamyl 5-phosphate + NADPH + H(+). Its pathway is amino-acid biosynthesis; L-proline biosynthesis; L-glutamate 5-semialdehyde from L-glutamate: step 2/2. In terms of biological role, catalyzes the NADPH-dependent reduction of L-glutamate 5-phosphate into L-glutamate 5-semialdehyde and phosphate. The product spontaneously undergoes cyclization to form 1-pyrroline-5-carboxylate. The chain is Gamma-glutamyl phosphate reductase from Actinobacillus pleuropneumoniae serotype 7 (strain AP76).